A 417-amino-acid chain; its full sequence is MSEIRNYTLNFGPQHPSAHGVLRLVLELDGETIVRSDPHIGLLHRGTEKLAEYKPFNQSIGYMDRLDYVSMMANEHAYVMGIEKMLGIEVPERAQYIRVMFDEITRILNHLMWLGAHALDIGAMTVFLYAFREREDLMDCYEAVSGARMHATYYRPGGVYRDLPDTMAKYEESKWHSGKKLDQLNETREGSLLDFIEAFTERFPGYVDEYETLLTDNRIWKQRTVDIGIVSPERALQLGFTGPMLRGSGIAWDLRKKQPYEVYDKLDFDIPVGATGDCYDRYLVRVAEMRESNKIIKQCVKWLKENPGPVISDDHKVTPPSREDAKSNMEALIHHFKLFTEGYSVPEGESYTAVEHPKGEFGIYMVSDGANKPYRLKVRAPGFAHLASLDEMAKGHMIADVVAIIGTQDIVFGEVDR.

This sequence belongs to the complex I 49 kDa subunit family. In terms of assembly, NDH-1 is composed of 14 different subunits. Subunits NuoB, C, D, E, F, and G constitute the peripheral sector of the complex.

It localises to the cell inner membrane. The enzyme catalyses a quinone + NADH + 5 H(+)(in) = a quinol + NAD(+) + 4 H(+)(out). In terms of biological role, NDH-1 shuttles electrons from NADH, via FMN and iron-sulfur (Fe-S) centers, to quinones in the respiratory chain. The immediate electron acceptor for the enzyme in this species is believed to be ubiquinone. Couples the redox reaction to proton translocation (for every two electrons transferred, four hydrogen ions are translocated across the cytoplasmic membrane), and thus conserves the redox energy in a proton gradient. The chain is NADH-quinone oxidoreductase subunit D from Hydrogenovibrio crunogenus (strain DSM 25203 / XCL-2) (Thiomicrospira crunogena).